Consider the following 551-residue polypeptide: MRSALALAALLLLLLSPPSLSQEKSPQPGPTPMATSTSTRPAPASAPAPKSSVAASVPAEQNTTPMTTKAPATQSPSASPGSSVENSAPAQGSTTTQQSLSVTTKAEAKDAGGVPTAHVTGSARPVTSGSQVAAQDPAASKAPSNHSITTKPLATEATSQAPRQTTDVGTPGPTAPPVTNSTSPDLLGHATPKPSEGPQLSFPTAAGSLGPVTGSGTGSGTLSTPQGKPATLTPVASSAETQGMPSPMPPSPASPSSSPFPSSPSPSPALQPSGPSAAGTEDTTGRGPTSSSTELASTALHGPSTLSPTSAVRDQRVSCGPPERPTEQLLILNLTRSSPCIHVFQRQSQGEGETEISMHSTDSLPEDKLVTLLCRAAKPTFNPAQDQCHVLLAPMLGSHAVVVKEITIKTNLLPTAVFELLKDRWDDLREEGVSDMQLGDQGPPEETEDRFSLPLIITIVCMASFLLLVAALYGCCHQRLSHRKDQQRLTEELQTVENGYHDNPTLEVMETSAEMQEKKVVNLNGELGDSWIVPLDNLTKDDLDEEEDTHL.

A signal peptide spans 1 to 21 (MRSALALAALLLLLLSPPSLS). Residues 18-324 (PSLSQEKSPQ…QRVSCGPPER (307 aa)) are disordered. The Extracellular portion of the chain corresponds to 22–452 (QEKSPQPGPT…PPEETEDRFS (431 aa)). Residues 32–59 (PMATSTSTRPAPASAPAPKSSVAASVPA) show a composition bias toward low complexity. Positions 60–90 (EQNTTPMTTKAPATQSPSASPGSSVENSAPA) are enriched in polar residues. The segment covering 91–104 (QGSTTTQQSLSVTT) has biased composition (low complexity). Positions 142–164 (APSNHSITTKPLATEATSQAPRQ) are enriched in polar residues. Asn-145 and Asn-180 each carry an N-linked (GlcNAc...) asparagine glycan. Positions 234-244 (PVASSAETQGM) are enriched in polar residues. Residues 289–300 (TSSSTELASTAL) are compositionally biased toward low complexity. The N-linked (GlcNAc...) asparagine glycan is linked to Asn-333. A helical transmembrane segment spans residues 453-473 (LPLIITIVCMASFLLLVAALY). The Cytoplasmic portion of the chain corresponds to 474 to 551 (GCCHQRLSHR…DLDEEEDTHL (78 aa)). Thr-511 carries the post-translational modification Phosphothreonine. Ser-530 is subject to Phosphoserine. Thr-549 carries the post-translational modification Phosphothreonine.

Belongs to the podocalyxin family. Monomer; when associated with the membrane raft. Oligomer; when integrated in the apical membrane. Found in a complex with EZR, PODXL and NHERF2. Associates with the actin cytoskeleton through complex formation with EZR and NHERF2. Interacts (via the C-terminal PDZ-binding motif DTHL) with NHERF1 (via the PDZ domains); interaction is not detected in glomerular epithelium cells, take place early in the secretory pathway and is necessary for its apical membrane sorting. Interacts (via the C-terminal PDZ-binding motif DTHL) with NHERF2 (via the PDZ 1 domain); interaction is detected in glomerular epithelium cells. Interacts with EZR. N- and O-linked glycosylated. Sialoglycoprotein. In terms of tissue distribution, glomerular epithelium cell (podocyte) and endothelial cells.

It localises to the apical cell membrane. The protein resides in the cell projection. Its subcellular location is the microvillus. The protein localises to the membrane raft. It is found in the lamellipodium. It localises to the filopodium. The protein resides in the ruffle. Its subcellular location is the membrane. Its function is as follows. Involved in the regulation of both adhesion and cell morphology and cancer progression. Functions as an anti-adhesive molecule that maintains an open filtration pathway between neighboring foot processes in the podocyte by charge repulsion. Acts as a pro-adhesive molecule, enhancing the adherence of cells to immobilized ligands, increasing the rate of migration and cell-cell contacts in an integrin-dependent manner. Induces the formation of apical actin-dependent microvilli. Involved in the formation of a preapical plasma membrane subdomain to set up initial epithelial polarization and the apical lumen formation during renal tubulogenesis. Plays a role in cancer development and aggressiveness by inducing cell migration and invasion through its interaction with the actin-binding protein EZR. Affects EZR-dependent signaling events, leading to increased activities of the MAPK and PI3K pathways in cancer cells. The polypeptide is Podocalyxin (PODXL) (Oryctolagus cuniculus (Rabbit)).